We begin with the raw amino-acid sequence, 312 residues long: Tumor necrosis factor receptor type 1-associated DEATH domain protein (312 aa).

The short motif at 147–163 (LRDEELAELEDALRNLK) is the Nuclear export signal element. The disordered stretch occupies residues 170–195 (GGDGEVASAPLQPPVPSLSEVKPPPP). A Death domain is found at 179-289 (PLQPPVPSLS…ATLQRLVEAL (111 aa)). The segment covering 180–195 (LQPPVPSLSEVKPPPP) has biased composition (pro residues). Residues 222 to 289 (FARSVGLKWR…ATLQRLVEAL (68 aa)) form an interaction with KRT14 and KRT18 region. The short motif at 231–244 (RKVGRSLQRGCRAL) is the Nuclear localization signal element. (Microbial infection) N-beta-linked (GlcNAc) arginine glycans are attached at residues Arg235 and Arg245.

Stimulation of TNF-alpha receptor TNFRSF1A leads to the formation of two distinct signaling complexes. Plasma membrane-bound complex I is composed of TNFRSF1A, TRADD, RIPK1, TRAF2 and BIRC2/c-IAP1 or BIRC3 which interacts with CHUCK/IKK-alpha, IKBKB/IKK-beta and IKBKG/IKK-gamma promoting cell survival. Subsequently, TRADD, RIPK1 and TRAF2 dissociate from TNFRSF1A and form cytoplasmic complex II with FADD and caspase CASP8 promoting cell apoptosis. Within complex I, interacts with TNFRSF1A/TNFR1, TRAF2 and kinase RIPK1. Within complex I, interacts with TRPC4AP; the interaction promotes NF-kappa B activation. UXT1 associates with complex I; the interaction prevents the formation of complex II. Within complex I Interacts with scaffold protein DAB2IP. Interacts with autophagy receptor SQSTM1. Interacts with E3 ligase TRIP12. Interacts with kinase HIPK2. Interacts with keratin KRT14. Interacts with keratin KRT18. Interacts with keratins KRT16 and KRT17. Interacts with FADD. Interacts with TOMM70. Interacts with TMC8; the interaction impairs the formation of complex I and facilites complex II formation. In terms of processing, (Microbial infection) Glycosylated at Arg-235 by enteropathogenic E.coli protein NleB1, C.rodentium protein NleB and S.typhimurium proteins Ssek1 and Ssek3: arginine GlcNAcylation prevents homotypic/heterotypic death domain interactions and assembly of the oligomeric TNFRSF1A/TNFR1 complex, thereby disrupting TNF signaling. As to expression, found in all examined tissues.

It is found in the nucleus. The protein localises to the cytoplasm. It localises to the cytoskeleton. In terms of biological role, adapter molecule for TNFRSF1A/TNFR1 that specifically associates with the cytoplasmic domain of activated TNFRSF1A/TNFR1 mediating its interaction with FADD. Overexpression of TRADD leads to two major TNF-induced responses, apoptosis and activation of NF-kappa-B. The nuclear form acts as a tumor suppressor by preventing ubiquitination and degradation of isoform p19ARF/ARF of CDKN2A by TRIP12: acts by interacting with TRIP12, leading to disrupt interaction between TRIP12 and isoform p19ARF/ARF of CDKN2A. The protein is Tumor necrosis factor receptor type 1-associated DEATH domain protein of Homo sapiens (Human).